The following is a 570-amino-acid chain: Sulfite reductase [NADPH] hemoprotein beta-component (570 aa).

[4Fe-4S] cluster contacts are provided by Cys-434, Cys-440, Cys-479, and Cys-483. Position 483 (Cys-483) interacts with siroheme.

The protein belongs to the nitrite and sulfite reductase 4Fe-4S domain family. Alpha(8)-beta(8). The alpha component is a flavoprotein, the beta component is a hemoprotein. It depends on siroheme as a cofactor. [4Fe-4S] cluster serves as cofactor.

It catalyses the reaction hydrogen sulfide + 3 NADP(+) + 3 H2O = sulfite + 3 NADPH + 4 H(+). It functions in the pathway sulfur metabolism; hydrogen sulfide biosynthesis; hydrogen sulfide from sulfite (NADPH route): step 1/1. In terms of biological role, component of the sulfite reductase complex that catalyzes the 6-electron reduction of sulfite to sulfide. This is one of several activities required for the biosynthesis of L-cysteine from sulfate. The sequence is that of Sulfite reductase [NADPH] hemoprotein beta-component from Escherichia coli O17:K52:H18 (strain UMN026 / ExPEC).